Here is a 295-residue protein sequence, read N- to C-terminus: Bifunctional protein FolD (295 aa).

NADP(+)-binding positions include 166 to 168 (GRS), Ser-191, and Ile-232.

It belongs to the tetrahydrofolate dehydrogenase/cyclohydrolase family. Homodimer.

It catalyses the reaction (6R)-5,10-methylene-5,6,7,8-tetrahydrofolate + NADP(+) = (6R)-5,10-methenyltetrahydrofolate + NADPH. The catalysed reaction is (6R)-5,10-methenyltetrahydrofolate + H2O = (6R)-10-formyltetrahydrofolate + H(+). Its pathway is one-carbon metabolism; tetrahydrofolate interconversion. Functionally, catalyzes the oxidation of 5,10-methylenetetrahydrofolate to 5,10-methenyltetrahydrofolate and then the hydrolysis of 5,10-methenyltetrahydrofolate to 10-formyltetrahydrofolate. The polypeptide is Bifunctional protein FolD (Rhodopseudomonas palustris (strain BisA53)).